We begin with the raw amino-acid sequence, 337 residues long: Phosphate acyltransferase (337 aa).

The protein belongs to the PlsX family. As to quaternary structure, homodimer. Probably interacts with PlsY.

It is found in the cytoplasm. It catalyses the reaction a fatty acyl-[ACP] + phosphate = an acyl phosphate + holo-[ACP]. It functions in the pathway lipid metabolism; phospholipid metabolism. Its function is as follows. Catalyzes the reversible formation of acyl-phosphate (acyl-PO(4)) from acyl-[acyl-carrier-protein] (acyl-ACP). This enzyme utilizes acyl-ACP as fatty acyl donor, but not acyl-CoA. This chain is Phosphate acyltransferase, found in Acidobacterium capsulatum (strain ATCC 51196 / DSM 11244 / BCRC 80197 / JCM 7670 / NBRC 15755 / NCIMB 13165 / 161).